Consider the following 262-residue polypeptide: Lens fiber major intrinsic protein (262 aa).

Residues 1-9 (MRELRSSSF) lie on the Cytoplasmic side of the membrane. Residues 10 to 29 (WRAILAEFLGSLLYTLLGLG) form a helical membrane-spanning segment. The Extracellular segment spans residues 30–41 (ASLRWAPGPHGV). Residues 42-59 (LGSALAFGLAQATLVQAL) form a helical membrane-spanning segment. Residues 60–61 (GH) are Cytoplasmic-facing. The segment at residues 62–77 (VSGGHINPAITLAFLL) is an intramembrane region (discontinuously helical). The short motif at 68–70 (NPA) is the NPA 1 element. Topologically, residues 78-82 (ASQLS) are cytoplasmic. The chain crosses the membrane as a helical span at residues 83 to 106 (LPRALGYLLAQLLGALAGAGVLYG). Residues 107 to 127 (VTPAAVRGTLGLSALHPSVGP) are Extracellular-facing. The chain crosses the membrane as a helical span at residues 128-148 (GQGTVVELLLTAQFILCVFAS). Over 149 to 156 (FDDRHDGR) the chain is Cytoplasmic. Residues 157-175 (PGSAALPVGFSLALGHLFG) traverse the membrane as a helical segment. At 176–178 (IPF) the chain is on the extracellular side. Positions 179-193 (TGAGMNPARSFAPAV) form an intramembrane region, discontinuously helical. The short motif at 184-186 (NPA) is the NPA 2 element. At 194–200 (ITRNFTN) the chain is on the extracellular side. The helical transmembrane segment at 201-222 (HWVFWAGPLLGAALAALLYELA) threads the bilayer. Over 223 to 262 (LCPRARSMAERLAVLRGEPPAAAPPPEPPAEPLELKTQGL) the chain is Cytoplasmic. The tract at residues 227–237 (ARSMAERLAVL) is interaction with CALM. Residues 240–262 (EPPAAAPPPEPPAEPLELKTQGL) are disordered. The span at 243-253 (AAAPPPEPPAE) shows a compositional bias: pro residues.

Belongs to the MIP/aquaporin (TC 1.A.8) family. In terms of assembly, homotetramer; each monomer provides an independent water pore. Two homotetramers on opposing membranes can dimerize, forming a cell-cell junction. Interacts with CALM; the calcium-calmodulin/CALM complex interacts with the cytoplasmic domains of two aquaporins, leading to channel closure. During early stages of lens development, interacts through its C-terminal region with Cx56 and GJA8/Cx45.6. Major component of lens fiber gap junctions.

It localises to the cell membrane. The protein resides in the cell junction. The enzyme catalyses H2O(in) = H2O(out). The water channel activity is inhibited by calcium through calmodulin/CALM. In terms of biological role, aquaporins form homotetrameric transmembrane channels, with each monomer independently mediating water transport across the plasma membrane along its osmotic gradient. Specifically expressed in lens fiber cells, this aquaporin is crucial for maintaining lens water homeostasis and transparency. Beyond water permeability, it also acts as a cell-to-cell adhesion molecule, forming thin junctions between lens fiber cells that are essential for maintaining the ordered structure and transparency of the lens. The polypeptide is Lens fiber major intrinsic protein (Gallus gallus (Chicken)).